Reading from the N-terminus, the 442-residue chain is PCI domain-containing protein C1105.07c (442 aa).

The PCI domain maps to 224–415 (VTFRYYLGRC…STLVLKKDPS (192 aa)).

Its subcellular location is the cytoplasm. It localises to the nucleus envelope. The chain is PCI domain-containing protein C1105.07c from Schizosaccharomyces pombe (strain 972 / ATCC 24843) (Fission yeast).